Reading from the N-terminus, the 507-residue chain is Cobyric acid synthase (507 aa).

One can recognise a GATase cobBQ-type domain in the interval 273–468 (RPVIAVIAYP…LHGMFEDPAV (196 aa)). Catalysis depends on C354, which acts as the Nucleophile. The active site involves H460.

The protein belongs to the CobB/CobQ family. CobQ subfamily.

Its pathway is cofactor biosynthesis; adenosylcobalamin biosynthesis. Functionally, catalyzes amidations at positions B, D, E, and G on adenosylcobyrinic A,C-diamide. NH(2) groups are provided by glutamine, and one molecule of ATP is hydrogenolyzed for each amidation. The chain is Cobyric acid synthase from Polaromonas sp. (strain JS666 / ATCC BAA-500).